The sequence spans 75 residues: Large ribosomal subunit protein bL31 (75 aa).

In terms of assembly, part of the 50S ribosomal subunit.

Functionally, binds the 23S rRNA. This Rhodopseudomonas palustris (strain ATCC BAA-98 / CGA009) protein is Large ribosomal subunit protein bL31.